The following is a 420-amino-acid chain: D-tagatose-1,6-bisphosphate aldolase subunit GatZ (420 aa).

It belongs to the GatZ/KbaZ family. GatZ subfamily. Forms a complex with GatY.

It functions in the pathway carbohydrate metabolism; D-tagatose 6-phosphate degradation; D-glyceraldehyde 3-phosphate and glycerone phosphate from D-tagatose 6-phosphate: step 2/2. Component of the tagatose-1,6-bisphosphate aldolase GatYZ that is required for full activity and stability of the Y subunit. Could have a chaperone-like function for the proper and stable folding of GatY. When expressed alone, GatZ does not show any aldolase activity. Is involved in the catabolism of galactitol. The sequence is that of D-tagatose-1,6-bisphosphate aldolase subunit GatZ (gatZ) from Escherichia coli.